Here is a 152-residue protein sequence, read N- to C-terminus: Ribosome maturation factor RimP (152 aa).

This sequence belongs to the RimP family.

Its subcellular location is the cytoplasm. Functionally, required for maturation of 30S ribosomal subunits. The polypeptide is Ribosome maturation factor RimP (Brevibacillus brevis (strain 47 / JCM 6285 / NBRC 100599)).